A 122-amino-acid chain; its full sequence is Large ribosomal subunit protein uL14 (122 aa).

Belongs to the universal ribosomal protein uL14 family. Part of the 50S ribosomal subunit. Forms a cluster with proteins L3 and L19. In the 70S ribosome, L14 and L19 interact and together make contacts with the 16S rRNA in bridges B5 and B8.

Its function is as follows. Binds to 23S rRNA. Forms part of two intersubunit bridges in the 70S ribosome. The polypeptide is Large ribosomal subunit protein uL14 (Novosphingobium aromaticivorans (strain ATCC 700278 / DSM 12444 / CCUG 56034 / CIP 105152 / NBRC 16084 / F199)).